The chain runs to 627 residues: E3 ubiquitin-protein ligase DTX1 (627 aa).

WWE domains are found at residues 14-94 and 95-171; these read GLGF…PVRR and NFYD…RLRR. 3 disordered regions span residues 222-254, 269-327, and 368-398; these read QRRK…ALVV, PATG…ALPV, and PPVS…KSKN. Pro residues-rich tracts occupy residues 230-248 and 275-287; these read PAAP…PGGP and EPAP…PRSP. The short motif at 240 to 243 is the SH3-binding element; sequence PPPL. Residues 296–314 show a composition bias toward polar residues; sequence PGQNNLSRPGPQRSTSVSA. Over residues 386 to 396 the composition is skewed to basic residues; it reads RKTKKKHLKKS. The segment at 418-479 adopts an RING-type zinc-finger fold; sequence CTICMERLVT…DGSLQCPTCK (62 aa).

This sequence belongs to the Deltex family. As to quaternary structure, homodimer. May form a heterodimer with other members of the Deltex family. Interacts with NOTCH1 via its N-terminal region and EIF3F, the interaction is required for NOTCH1 deubiquitination. Interacts with EP300. Forms a heterodimer with BBAP; the heterodimerization leading to an increase of in vitro ubiquitin ligase activity. Interacts with ITCH. Ubiquitinated; undergoes 'Lys-29'-linked polyubiquitination catalyzed by ITCH. In terms of tissue distribution, predominantly expressed in the brain and testis. Weakly expressed in the thymus, spleen and ovary. Predominantly expressed in regions containing post-mitotic differentiating neurons.

It is found in the cytoplasm. Its subcellular location is the nucleus. It catalyses the reaction S-ubiquitinyl-[E2 ubiquitin-conjugating enzyme]-L-cysteine + [acceptor protein]-L-lysine = [E2 ubiquitin-conjugating enzyme]-L-cysteine + N(6)-ubiquitinyl-[acceptor protein]-L-lysine.. Its pathway is protein modification; protein ubiquitination. In terms of biological role, regulator of Notch signaling, a signaling pathway involved in cell-cell communications that regulates a broad spectrum of cell-fate determinations. Mainly acts as a positive regulator of Notch, but it also acts as a negative regulator, depending on the developmental and cell context. Mediates the antineural activity of Notch, possibly by inhibiting the transcriptional activation mediated by MATCH1. Involved in neurogenesis, lymphogenesis and myogenesis, and may also be involved in MZB (Marginal zone B) cell differentiation. Promotes B-cell development at the expense of T-cell development, suggesting that it can antagonize NOTCH1. Functions as an ubiquitin ligase protein in vivo, mediating ubiquitination and promoting degradation of MEKK1, suggesting that it may regulate the Notch pathway via some ubiquitin ligase activity. In Mus musculus (Mouse), this protein is E3 ubiquitin-protein ligase DTX1 (Dtx1).